We begin with the raw amino-acid sequence, 428 residues long: Immunoglobulin superfamily containing leucine-rich repeat protein (428 aa).

Positions 1 to 18 (MQELHLLWWALLLGLAQA) are cleaved as a signal peptide. One can recognise an LRRNT domain in the interval 19–50 (CPEPCDCGEKYGFQIADCAYRDLEAVPPGFPA). A glycan (N-linked (GlcNAc...) asparagine) is linked at asparagine 51. 5 LRR repeats span residues 51–72 (NVTALSLSANRLPGLPEGAFRE), 75–96 (LLQSLWLAHNEIRMVAAGALAS), 99–122 (HLKSLDLSHNLISDFAWSDLHNLS), 123–144 (ALQLLKMDSNELTFIPRDAFRS), and 147–168 (ALRSLQLNHNRLHTLAEGTFTP). In terms of domain architecture, LRRCT spans 180–231 (NPFDCTCGIVWLKTWALATAVSIPEQDNIACTSPHVLKGTPLSRLPPLPCSA). The Ig-like domain occupies 232-343 (PSVQLSYQPS…GSAESSVDVA (112 aa)). Cysteine 257 and cysteine 327 are oxidised to a cystine. Residue asparagine 309 is glycosylated (N-linked (GlcNAc...) asparagine).

The protein resides in the secreted. The chain is Immunoglobulin superfamily containing leucine-rich repeat protein (ISLR) from Pongo abelii (Sumatran orangutan).